The primary structure comprises 307 residues: Dihydroorotate dehydrogenase A (fumarate) (307 aa).

FMN is bound by residues Ser21 and 46 to 47; that span reads KT. Residues Lys46, 70–74, and Asn130 contribute to the substrate site; that span reads NSVGL. Residue Asn130 coordinates FMN. The active-site Nucleophile is Cys133. The FMN site is built by Lys168 and Ile194. A substrate-binding site is contributed by 195-196; it reads NT. FMN is bound by residues Gly220, 246-247, and 268-269; these read GG and GS.

It belongs to the dihydroorotate dehydrogenase family. Type 1 subfamily. Homodimer. Requires FMN as cofactor.

It localises to the cytoplasm. The enzyme catalyses (S)-dihydroorotate + fumarate = orotate + succinate. It participates in pyrimidine metabolism; UMP biosynthesis via de novo pathway. Its function is as follows. Catalyzes the conversion of dihydroorotate to orotate with fumarate as the electron acceptor. This chain is Dihydroorotate dehydrogenase A (fumarate) (pyrD), found in Lactobacillus delbrueckii subsp. bulgaricus (strain ATCC BAA-365 / Lb-18).